The primary structure comprises 193 residues: Potassium-transporting ATPase KdpC subunit (193 aa).

A helical transmembrane segment spans residues 7–27 (PLVVIFAVLTVVTGMAYPAVM).

This sequence belongs to the KdpC family. In terms of assembly, the system is composed of three essential subunits: KdpA, KdpB and KdpC.

The protein resides in the cell inner membrane. Part of the high-affinity ATP-driven potassium transport (or Kdp) system, which catalyzes the hydrolysis of ATP coupled with the electrogenic transport of potassium into the cytoplasm. This subunit acts as a catalytic chaperone that increases the ATP-binding affinity of the ATP-hydrolyzing subunit KdpB by the formation of a transient KdpB/KdpC/ATP ternary complex. The protein is Potassium-transporting ATPase KdpC subunit of Burkholderia vietnamiensis (strain G4 / LMG 22486) (Burkholderia cepacia (strain R1808)).